The following is a 273-amino-acid chain: Putative phosphoenolpyruvate synthase regulatory protein (273 aa).

153 to 160 (GVSRCGKT) is an ADP binding site.

Belongs to the pyruvate, phosphate/water dikinase regulatory protein family. PSRP subfamily.

It catalyses the reaction [pyruvate, water dikinase] + ADP = [pyruvate, water dikinase]-phosphate + AMP + H(+). The enzyme catalyses [pyruvate, water dikinase]-phosphate + phosphate + H(+) = [pyruvate, water dikinase] + diphosphate. Its function is as follows. Bifunctional serine/threonine kinase and phosphorylase involved in the regulation of the phosphoenolpyruvate synthase (PEPS) by catalyzing its phosphorylation/dephosphorylation. This chain is Putative phosphoenolpyruvate synthase regulatory protein, found in Sodalis glossinidius (strain morsitans).